We begin with the raw amino-acid sequence, 165 residues long: Nucleotide-binding protein Ccur92_01650 (165 aa).

It belongs to the YajQ family.

Nucleotide-binding protein. In Campylobacter curvus (strain 525.92), this protein is Nucleotide-binding protein Ccur92_01650.